We begin with the raw amino-acid sequence, 64 residues long: MASRNKLVVPGVEQALDQFKLEVAQEFGVNLGSDTVARANGSVGGEMTKRLVQQAQSQLNGTTK.

Belongs to the alpha/beta-type SASP family.

In terms of biological role, SASP are bound to spore DNA. They are double-stranded DNA-binding proteins that cause DNA to change to an a-like conformation. They protect the DNA backbone from chemical and enzymatic cleavage and are thus involved in dormant spore's high resistance to UV light. The polypeptide is Small, acid-soluble spore protein D (sspD) (Bacillus subtilis (strain 168)).